A 238-amino-acid chain; its full sequence is Ribonuclease PH (238 aa).

Phosphate contacts are provided by residues R86 and 124–126 (GTR).

This sequence belongs to the RNase PH family. As to quaternary structure, homohexameric ring arranged as a trimer of dimers.

It catalyses the reaction tRNA(n+1) + phosphate = tRNA(n) + a ribonucleoside 5'-diphosphate. Functionally, phosphorolytic 3'-5' exoribonuclease that plays an important role in tRNA 3'-end maturation. Removes nucleotide residues following the 3'-CCA terminus of tRNAs; can also add nucleotides to the ends of RNA molecules by using nucleoside diphosphates as substrates, but this may not be physiologically important. Probably plays a role in initiation of 16S rRNA degradation (leading to ribosome degradation) during starvation. The protein is Ribonuclease PH of Vibrio atlanticus (strain LGP32) (Vibrio splendidus (strain Mel32)).